The chain runs to 1263 residues: DNA-directed RNA polymerase subunit beta (1263 aa).

It belongs to the RNA polymerase beta chain family. In terms of assembly, the RNAP catalytic core consists of 2 alpha, 1 beta, 1 beta' and 1 omega subunit. When a sigma factor is associated with the core the holoenzyme is formed, which can initiate transcription.

The enzyme catalyses RNA(n) + a ribonucleoside 5'-triphosphate = RNA(n+1) + diphosphate. Functionally, DNA-dependent RNA polymerase catalyzes the transcription of DNA into RNA using the four ribonucleoside triphosphates as substrates. This is DNA-directed RNA polymerase subunit beta from Thermotoga maritima (strain ATCC 43589 / DSM 3109 / JCM 10099 / NBRC 100826 / MSB8).